The following is a 43-amino-acid chain: Histone H3 (43 aa).

The nucleosome is a histone octamer containing two molecules each of H2A, H2B, H3 and H4 assembled in one H3-H4 heterotetramer and two H2A-H2B heterodimers. The octamer wraps approximately 147 bp of DNA.

The protein localises to the nucleus. Its subcellular location is the chromosome. Core component of nucleosome. Nucleosomes wrap and compact DNA into chromatin, limiting DNA accessibility to the cellular machineries which require DNA as a template. Histones thereby play a central role in transcription regulation, DNA repair, DNA replication and chromosomal stability. DNA accessibility is regulated via a complex set of post-translational modifications of histones, also called histone code, and nucleosome remodeling. The chain is Histone H3 from Penaeus vannamei (Whiteleg shrimp).